A 150-amino-acid polypeptide reads, in one-letter code: Nucleoside diphosphate kinase (150 aa).

Residues lysine 9, phenylalanine 57, arginine 85, threonine 91, arginine 102, and asparagine 112 each contribute to the ATP site. Histidine 115 acts as the Pros-phosphohistidine intermediate in catalysis.

Belongs to the NDK family. The cofactor is Mg(2+).

It is found in the cytoplasm. It carries out the reaction a 2'-deoxyribonucleoside 5'-diphosphate + ATP = a 2'-deoxyribonucleoside 5'-triphosphate + ADP. The enzyme catalyses a ribonucleoside 5'-diphosphate + ATP = a ribonucleoside 5'-triphosphate + ADP. Its function is as follows. Major role in the synthesis of nucleoside triphosphates other than ATP. The ATP gamma phosphate is transferred to the NDP beta phosphate via a ping-pong mechanism, using a phosphorylated active-site intermediate. The polypeptide is Nucleoside diphosphate kinase (Methanothermobacter thermautotrophicus (strain ATCC 29096 / DSM 1053 / JCM 10044 / NBRC 100330 / Delta H) (Methanobacterium thermoautotrophicum)).